We begin with the raw amino-acid sequence, 251 residues long: Phosphomannomutase (251 aa).

Catalysis depends on Asp18, which acts as the Nucleophile. Mg(2+) is bound by residues Asp18 and Asp20. The active-site Proton donor/acceptor is the Asp20. Alpha-D-mannose 1-phosphate contacts are provided by Arg27, Arg129, Arg140, Arg147, Ser185, and Asp187. The Mg(2+) site is built by Asp213, Phe225, Asp227, and Thr230.

It belongs to the eukaryotic PMM family. Homodimer. It depends on Mg(2+) as a cofactor.

It localises to the cytoplasm. It carries out the reaction alpha-D-mannose 1-phosphate = D-mannose 6-phosphate. It participates in nucleotide-sugar biosynthesis; GDP-alpha-D-mannose biosynthesis; alpha-D-mannose 1-phosphate from D-fructose 6-phosphate: step 2/2. Catalyzes the interconversion of mannose-6-phosphate to mannose-1-phosphate, the precursor for the synthesis of GDP-mannose. GDP-mannose is an essential sugar nucleotide for the synthesis of D-mannose-containing cell wall polysaccharides (galactomannans and glucomannans), glycolipids, glycoproteins and the antioxidant L-ascorbate. This Galdieria sulphuraria (Red alga) protein is Phosphomannomutase.